Consider the following 3564-residue polypeptide: CUB and sushi domain-containing protein 1 (3564 aa).

The N-terminal stretch at 1–29 (MTAWRKFKSLLLPLVLAVLCAGLLTAAKG) is a signal peptide. At 30-3487 (QNCGGLVQGP…NHYQGTSSGS (3458 aa)) the chain is on the extracellular side. 10 disulfides stabilise this stretch: Cys32–Cys58, Cys145–Cys185, Cys171–Cys202, Cys208–Cys234, Cys349–Cys389, Cys375–Cys406, Cys411–Cys437, Cys527–Cys567, Cys553–Cys580, and Cys584–Cys610. Positions 32–140 (CGGLVQGPNG…QGFKAMYEVL (109 aa)) constitute a CUB 1 domain. Asn40 and Asn57 each carry an N-linked (GlcNAc...) asparagine glycan. Residues 143 to 204 (HTCGNPGEIL…WDFPAPFCRA (62 aa)) enclose the Sushi 1 domain. The CUB 2 domain occupies 208–312 (CGGTLRGTSG…KGFNAQFQVK (105 aa)). Positions 347–408 (DMCPDPGIPD…WNDHRPICRA (62 aa)) constitute a Sushi 2 domain. Residues 411 to 522 (CGSNLRGPSG…PGFKAVYQEI (112 aa)) form the CUB 3 domain. The region spanning 525 to 582 (GGCGDPGIPAYGKRTGSSFLHGDTLTFECQAAFELVGERVITCQKNNQWSGNKPSCVF) is the Sushi 3 domain. In terms of domain architecture, CUB 4 spans 584-692 (CFFNFTAPSG…RGFNITYTTF (109 aa)). N-linked (GlcNAc...) asparagine glycans are attached at residues Asn587 and Asn686. The Sushi 4 domain occupies 695–756 (NECHDPGIPV…WSSTVPRCEA (62 aa)). Disulfide bonds link Cys697/Cys738, Cys723/Cys754, Cys758/Cys784, Cys873/Cys913, Cys899/Cys926, and Cys930/Cys956. In terms of domain architecture, CUB 5 spans 758 to 866 (CGGHLTASSG…VGFLIHYESV (109 aa)). One can recognise a Sushi 5 domain in the interval 871 to 928 (DSCLDPGIPVNGQRHGSNFGIRSTVTFSCDPGYTLSDDEPLVCEKNHQWNHALPSCDA). The region spanning 930 to 1040 (CGGYIHGKSG…EGFNITFAEY (111 aa)) is the CUB 6 domain. Asn955, Asn1015, and Asn1034 each carry an N-linked (GlcNAc...) asparagine glycan. Residues 1043–1102 (EPCDDPGVPAFSRRIGFQFGVGDTLAFTCFQGYRLEGATKLTCLGGGRRVWSAPLPRCVA) form the Sushi 6 domain. 3 disulfides stabilise this stretch: Cys1045/Cys1085, Cys1071/Cys1100, and Cys1104/Cys1130. In terms of domain architecture, CUB 7 spans 1104-1212 (CGASVKGNEG…QGFQLTYTSF (109 aa)). N-linked (GlcNAc...) asparagine glycosylation is found at Asn1184 and Asn1197. A Sushi 7 domain is found at 1215–1275 (VKCEDPGIPN…WDKPMPSCVA (61 aa)). Disulfide bonds link Cys1217–Cys1258, Cys1244–Cys1273, Cys1277–Cys1304, Cys1391–Cys1431, Cys1417–Cys1447, Cys1451–Cys1477, Cys1564–Cys1604, Cys1590–Cys1621, Cys1625–Cys1651, Cys1741–Cys1781, Cys1767–Cys1798, and Cys1802–Cys1828. Residues 1277–1386 (CGGLVHAATS…SGFSIQFSTS (110 aa)) enclose the CUB 8 domain. The 61-residue stretch at 1389–1449 (STCNDPGMPQ…WQPDPPSCIA (61 aa)) folds into the Sushi 8 domain. Asn1399 carries N-linked (GlcNAc...) asparagine glycosylation. The region spanning 1451–1559 (CGGNLTGPAG…SGFAIEFKEK (109 aa)) is the CUB 9 domain. Residues Asn1454 and Asn1572 are each glycosylated (N-linked (GlcNAc...) asparagine). The Sushi 9 domain maps to 1562-1623 (EACFDPGNIM…WDRALPACQA (62 aa)). A CUB 10 domain is found at 1625 to 1733 (CGGQYTGSEG…RGFHFVYQAV (109 aa)). The N-linked (GlcNAc...) asparagine glycan is linked to Asn1644. The 62-residue stretch at 1739-1800 (TQCSSVPEPR…WNDTIPSCVV (62 aa)) folds into the Sushi 10 domain. Asn1792, Asn1805, and Asn1882 each carry an N-linked (GlcNAc...) asparagine glycan. The region spanning 1802-1910 (CSGNFTQRRG…AGFHLEYKTV (109 aa)) is the CUB 11 domain. The 60-residue stretch at 1913–1972 (AACQEPALPSNGIKIGDRYMVNDVLSFQCEPGYTLQGRSHISCMPGTVRRWNYPSPLCIA) folds into the Sushi 11 domain. 3 disulfide bridges follow: Cys1915–Cys1955, Cys1941–Cys1970, and Cys1974–Cys2000. In terms of domain architecture, CUB 12 spans 1974–2082 (CGGTLTSMSG…QGFKLSYQAY (109 aa)). Residue Asn2018 is glycosylated (N-linked (GlcNAc...) asparagine). A Sushi 12 domain is found at 2085-2144 (QNCPDPPAFQNGFMINSDYSVGQSISFECYPGYILLGHPVLTCQHGTDRNWNYPFPRCDA). 3 disulfide bridges follow: Cys2087-Cys2127, Cys2113-Cys2142, and Cys2146-Cys2172. One can recognise a CUB 13 domain in the interval 2146–2257 (CGYNVTSQNG…LNFHAFQLKR (112 aa)). N-linked (GlcNAc...) asparagine glycosylation is found at Asn2149, Asn2154, and Asn2187. The Sushi 13 domain occupies 2256–2317 (KRCPPPPAVP…FQGSPPTCEA (62 aa)). 3 disulfide bridges follow: Cys2258/Cys2300, Cys2286/Cys2315, and Cys2319/Cys2347. The CUB 14 domain occupies 2319-2430 (CPANEVRTES…KGFKIRYAAP (112 aa)). Asn2358, Asn2394, Asn2400, Asn2445, Asn2470, and Asn2503 each carry an N-linked (GlcNAc...) asparagine glycan. 15 consecutive Sushi domains span residues 2430–2492 (PYCS…LCQA), 2493–2554 (VSCG…TCKP), 2555–2619 (VPCP…RCKV), 2620–2677 (ISCG…RCLA), 2678–2735 (GHCG…VCVP), 2736–2793 (ITCG…ICRV), 2794–2856 (VNCS…KCLA), 2857–2914 (ISCG…HCSG), 2918–2975 (GFCG…VCEA), 2976–3034 (VSCG…DCTI), 3035–3094 (ISCG…LCKA), 3095–3152 (VLCN…QCLP), 3153–3210 (VFCG…TCID), 3214–3272 (TACP…ECIP), and 3273–3332 (HACR…VCKS). Disulfide bonds link Cys2432–Cys2473, Cys2459–Cys2490, Cys2495–Cys2537, Cys2521–Cys2552, Cys2557–Cys2602, Cys2588–Cys2617, Cys2622–Cys2662, Cys2648–Cys2675, Cys2680–Cys2720, Cys2706–Cys2733, Cys2738–Cys2778, and Cys2764–Cys2791. The N-linked (GlcNAc...) asparagine glycan is linked to Asn2605. N-linked (GlcNAc...) asparagine glycans are attached at residues Asn2750 and Asn2761. Asn2795 carries an N-linked (GlcNAc...) asparagine glycan. 18 disulfides stabilise this stretch: Cys2796–Cys2841, Cys2827–Cys2854, Cys2859–Cys2899, Cys2885–Cys2912, Cys2920–Cys2960, Cys2946–Cys2973, Cys2978–Cys3019, Cys3005–Cys3032, Cys3037–Cys3079, Cys3063–Cys3092, Cys3097–Cys3137, Cys3123–Cys3150, Cys3155–Cys3195, Cys3181–Cys3208, Cys3216–Cys3257, Cys3243–Cys3270, Cys3275–Cys3317, and Cys3302–Cys3330. Asn2894 carries an N-linked (GlcNAc...) asparagine glycan. Asn2963 carries an N-linked (GlcNAc...) asparagine glycan. Asn3022, Asn3056, and Asn3086 each carry an N-linked (GlcNAc...) asparagine glycan. Asn3228 and Asn3260 each carry an N-linked (GlcNAc...) asparagine glycan. N-linked (GlcNAc...) asparagine glycans are attached at residues Asn3339, Asn3379, and Asn3386. A helical transmembrane segment spans residues 3488-3508 (VAAAILVPFFALILSGFAFYL). Over 3509 to 3564 (YKHRTRPKVQYNGYAGHENSNGQASFENPMYDTNLKPTEAKAVRFDTTLNTVCTVV) the chain is Cytoplasmic.

It belongs to the CSMD family.

Its subcellular location is the membrane. The polypeptide is CUB and sushi domain-containing protein 1 (Csmd1) (Mus musculus (Mouse)).